The primary structure comprises 303 residues: Glycosyltransferase AglJ (303 aa).

Transmembrane regions (helical) follow at residues 230 to 250 (FYFGSVGFASTATGLGLALYV) and 263 to 283 (VIAVVSMAGILFGVQLLMFGV).

Belongs to the glycosyltransferase 2 family.

The protein localises to the cell membrane. The protein operates within cell surface structure biogenesis; S-layer biogenesis. Functionally, involved in the assembly of a N-linked pentasaccharide that decorates the S-layer glycoprotein and flagellins. Adds the first hexose subunit of the pentasaccharide to the dolichol phosphate carrier. This is Glycosyltransferase AglJ (aglJ) from Haloferax volcanii (strain ATCC 29605 / DSM 3757 / JCM 8879 / NBRC 14742 / NCIMB 2012 / VKM B-1768 / DS2) (Halobacterium volcanii).